A 144-amino-acid chain; its full sequence is 3-dehydroquinate dehydratase (144 aa).

Tyr-24 acts as the Proton acceptor in catalysis. Substrate contacts are provided by Asn-76, His-82, and Asp-89. The active-site Proton donor is the His-102. Residues 103 to 104 (LS) and Arg-113 contribute to the substrate site.

The protein belongs to the type-II 3-dehydroquinase family. Homododecamer.

The enzyme catalyses 3-dehydroquinate = 3-dehydroshikimate + H2O. It participates in metabolic intermediate biosynthesis; chorismate biosynthesis; chorismate from D-erythrose 4-phosphate and phosphoenolpyruvate: step 3/7. Catalyzes a trans-dehydration via an enolate intermediate. The protein is 3-dehydroquinate dehydratase of Bordetella avium (strain 197N).